We begin with the raw amino-acid sequence, 98 residues long: DNA-directed RNA polymerase subunit Rpo11 (98 aa).

This sequence belongs to the archaeal Rpo11/eukaryotic RPB11/RPC19 RNA polymerase subunit family. As to quaternary structure, part of the RNA polymerase complex.

It is found in the cytoplasm. It catalyses the reaction RNA(n) + a ribonucleoside 5'-triphosphate = RNA(n+1) + diphosphate. In terms of biological role, DNA-dependent RNA polymerase (RNAP) catalyzes the transcription of DNA into RNA using the four ribonucleoside triphosphates as substrates. The polypeptide is DNA-directed RNA polymerase subunit Rpo11 (Korarchaeum cryptofilum (strain OPF8)).